The following is a 718-amino-acid chain: MELDVESTSITQLRSHCETCFPLMEEVVPRRERYVDLLEFSNFNGIPYPVVDPSRKPRRFLADFRYSWSIPLIHHYPNVEKDVLSSKRVHRVISKLKEQNDEQKNRAVQFFTEISARLSKFICKCCSYVLYKVFRRLMDKLLVCKEEMEVLYEAEQTGIPMVYLPLHRSHLDYLLITWCNWHFGLKLPHIASGDNLNLSGLGWLLRATGAFFIRRRVDPDDERGKDQLYRAILHSYIEQVLSKDMPIEFFLEGTRSRFGKALTPKNGLISNVVEAVQHGFIKDCYLVPVSYTYDAVVEGIFLHELMGIPKVRESVLGVFRGIFSGFSKSKQCGVVRMHYGRPIRLTEYLATITASLSSNHRTRPVRMTKLSTSFSYRELVPWHRTHSETVDDRTMIRAIGFHVVYEAQMMCSISPVAVVSCLLLAKWRGKVSRSTFERDCEWLCEKIIAEGGDVVGYQSKKTKGSALVKYAFEKLESCVEVTDEYVSPKESHSSFITLAYNKNSVICRFSIKSVIALTIVSRPSGTKLSIDQIVEDALSLCDWLQFEFMFCRPCDSLRELVHNVLGQKEWSDPIHGFLRSEIEDDGFLDAGGALNSGTLRVRDAKSRETLQFFANLVRPFVQSLYLISSFVVSEKCPTEPTSDNNIIRQLCQQSLAGDIDLPFAPLLESINSDSFKNALRVLKDKGLLQRSTPNSTARSGNSRLAELISNLERVLEVK.

The HXXXXD motif motif lies at 167–172 (HRSHLD). A helical transmembrane segment spans residues 409-425 (MMCSISPVAVVSCLLLA).

This sequence belongs to the GPAT/DAPAT family.

The protein localises to the mitochondrion membrane. The enzyme catalyses sn-glycerol 3-phosphate + an acyl-CoA = a 1-acyl-sn-glycero-3-phosphate + CoA. It functions in the pathway phospholipid metabolism; CDP-diacylglycerol biosynthesis; CDP-diacylglycerol from sn-glycerol 3-phosphate: step 1/3. The protein is Probable glycerol-3-phosphate acyltransferase, mitochondrial (acl-6) of Caenorhabditis elegans.